Consider the following 288-residue polypeptide: tRNA dimethylallyltransferase (288 aa).

17-24 provides a ligand contact to ATP; that stretch reads GPTASGKT. 19 to 24 provides a ligand contact to substrate; sequence TASGKT.

It belongs to the IPP transferase family. In terms of assembly, monomer. The cofactor is Mg(2+).

It catalyses the reaction adenosine(37) in tRNA + dimethylallyl diphosphate = N(6)-dimethylallyladenosine(37) in tRNA + diphosphate. In terms of biological role, catalyzes the transfer of a dimethylallyl group onto the adenine at position 37 in tRNAs that read codons beginning with uridine, leading to the formation of N6-(dimethylallyl)adenosine (i(6)A). In Jannaschia sp. (strain CCS1), this protein is tRNA dimethylallyltransferase.